Consider the following 351-residue polypeptide: Photosystem II D2 protein (351 aa).

The helical transmembrane segment at cysteine 39–threonine 59 threads the bilayer. A chlorophyll a-binding site is contributed by histidine 116. The helical transmembrane segment at glycine 123–proline 139 threads the bilayer. The pheophytin a site is built by glutamine 128 and asparagine 141. The chain crosses the membrane as a helical span at residues valine 151–alanine 164. Position 196 (histidine 196) interacts with chlorophyll a. The chain crosses the membrane as a helical span at residues glycine 206–aspartate 226. A plastoquinone contacts are provided by histidine 213 and phenylalanine 260. Position 213 (histidine 213) interacts with Fe cation. Histidine 267 provides a ligand contact to Fe cation. The helical transmembrane segment at glycine 277–arginine 293 threads the bilayer.

It belongs to the reaction center PufL/M/PsbA/D family. As to quaternary structure, PSII is composed of 1 copy each of membrane proteins PsbA, PsbB, PsbC, PsbD, PsbE, PsbF, PsbH, PsbI, PsbJ, PsbK, PsbL, PsbM, PsbT, PsbX, PsbY, PsbZ, Psb30/Ycf12, at least 3 peripheral proteins of the oxygen-evolving complex and a large number of cofactors. It forms dimeric complexes. The cofactor is The D1/D2 heterodimer binds P680, chlorophylls that are the primary electron donor of PSII, and subsequent electron acceptors. It shares a non-heme iron and each subunit binds pheophytin, quinone, additional chlorophylls, carotenoids and lipids. There is also a Cl(-1) ion associated with D1 and D2, which is required for oxygen evolution. The PSII complex binds additional chlorophylls, carotenoids and specific lipids..

The protein localises to the plastid. The protein resides in the chloroplast thylakoid membrane. It catalyses the reaction 2 a plastoquinone + 4 hnu + 2 H2O = 2 a plastoquinol + O2. Photosystem II (PSII) is a light-driven water:plastoquinone oxidoreductase that uses light energy to abstract electrons from H(2)O, generating O(2) and a proton gradient subsequently used for ATP formation. It consists of a core antenna complex that captures photons, and an electron transfer chain that converts photonic excitation into a charge separation. The D1/D2 (PsbA/PsbD) reaction center heterodimer binds P680, the primary electron donor of PSII as well as several subsequent electron acceptors. D2 is needed for assembly of a stable PSII complex. This chain is Photosystem II D2 protein, found in Pyropia yezoensis (Susabi-nori).